A 272-amino-acid chain; its full sequence is MTHPLQATIEELWERRTELSPQSPPTTIAAINSVIGDLDSGKLRVAEKIAGEWFTHQWIKKAVLLSFRVRDNRVQEAGDIRFYDKVDTKFEGWTEEQFRQGGFRVVPGTIVRKGSYVAKNAVLMPSFVNIGAYVDESTMVDTWVTVGSCAQIGKNVHLSGGVGIGGVLEPLQANPTIIEDNCFIGARSEVVEGVVIGENSVLSMGVYIGQSTPIYDRETGEVTYGRVPPGSVVISGTLPKADGKYSLYAAIIVKKVDAQTRSKTSINELLRP.

Residues R104 and D141 each coordinate substrate.

It belongs to the transferase hexapeptide repeat family. Homotrimer.

It localises to the cytoplasm. The catalysed reaction is (S)-2,3,4,5-tetrahydrodipicolinate + succinyl-CoA + H2O = (S)-2-succinylamino-6-oxoheptanedioate + CoA. The protein operates within amino-acid biosynthesis; L-lysine biosynthesis via DAP pathway; LL-2,6-diaminopimelate from (S)-tetrahydrodipicolinate (succinylase route): step 1/3. The protein is 2,3,4,5-tetrahydropyridine-2,6-dicarboxylate N-succinyltransferase of Dechloromonas aromatica (strain RCB).